Here is a 208-residue protein sequence, read N- to C-terminus: MEAPPVTMMPVTGGTINMMEYLLQGSVLDHSLESLIHRLRGLCDNMEPETFLDHEMVFLLKGQQASPFVLRARRSMDRAGAPWHLRYLGQPEMGDKNRHALVRNCVDIATSENLTDFLMEMGFRMDHEFVAKGHLFRKGIMKVVVYKIFRILVPGNTDSTEALSLSYLVELSVVAPAGQDMVSDDMRNFAEQLKPLVHLEKIDPKRLM.

Serine 66 is subject to Phosphoserine.

The protein belongs to the Mediator complex subunit 18 family. In terms of assembly, component of the Mediator complex, which is composed of MED1, MED4, MED6, MED7, MED8, MED9, MED10, MED11, MED12, MED13, MED13L, MED14, MED15, MED16, MED17, MED18, MED19, MED20, MED21, MED22, MED23, MED24, MED25, MED26, MED27, MED29, MED30, MED31, CCNC, CDK8 and CDC2L6/CDK11. The MED12, MED13, CCNC and CDK8 subunits form a distinct module termed the CDK8 module. Mediator containing the CDK8 module is less active than Mediator lacking this module in supporting transcriptional activation. Individual preparations of the Mediator complex lacking one or more distinct subunits have been variously termed ARC, CRSP, DRIP, PC2, SMCC and TRAP.

The protein resides in the nucleus. In terms of biological role, component of the Mediator complex, a coactivator involved in the regulated transcription of nearly all RNA polymerase II-dependent genes. Mediator functions as a bridge to convey information from gene-specific regulatory proteins to the basal RNA polymerase II transcription machinery. Mediator is recruited to promoters by direct interactions with regulatory proteins and serves as a scaffold for the assembly of a functional preinitiation complex with RNA polymerase II and the general transcription factors. This chain is Mediator of RNA polymerase II transcription subunit 18 (Med18), found in Mus musculus (Mouse).